Reading from the N-terminus, the 158-residue chain is Mediator of RNA polymerase II transcription subunit 31 (158 aa).

The tract at residues 130-158 (EQSAAEAGEQNTEQNKGDRGNVENQHGKT) is disordered.

This sequence belongs to the Mediator complex subunit 31 family. In terms of assembly, component of the Mediator complex.

The protein resides in the nucleus. Its function is as follows. Component of the Mediator complex, a coactivator involved in the regulated transcription of nearly all RNA polymerase II-dependent genes. Mediator functions as a bridge to convey information from gene-specific regulatory proteins to the basal RNA polymerase II transcription machinery. Mediator is recruited to promoters by direct interactions with regulatory proteins and serves as a scaffold for the assembly of a functional preinitiation complex with RNA polymerase II and the general transcription factors. This chain is Mediator of RNA polymerase II transcription subunit 31 (soh1), found in Emericella nidulans (strain FGSC A4 / ATCC 38163 / CBS 112.46 / NRRL 194 / M139) (Aspergillus nidulans).